The following is a 251-amino-acid chain: uncharacterized protein (251 aa).

It belongs to the PaiB family.

This is an uncharacterized protein from Emericella nidulans (strain FGSC A4 / ATCC 38163 / CBS 112.46 / NRRL 194 / M139) (Aspergillus nidulans).